We begin with the raw amino-acid sequence, 275 residues long: NH(3)-dependent NAD(+) synthetase (275 aa).

Residue 47–54 participates in ATP binding; that stretch reads GISGGQDS. Asp-53 contributes to the Mg(2+) binding site. Arg-141 lines the deamido-NAD(+) pocket. Thr-161 contacts ATP. Glu-166 contacts Mg(2+). The deamido-NAD(+) site is built by Lys-174 and Asp-181. ATP contacts are provided by Lys-190 and Thr-212. 261–262 contacts deamido-NAD(+); that stretch reads HK.

It belongs to the NAD synthetase family. As to quaternary structure, homodimer.

It catalyses the reaction deamido-NAD(+) + NH4(+) + ATP = AMP + diphosphate + NAD(+) + H(+). It participates in cofactor biosynthesis; NAD(+) biosynthesis; NAD(+) from deamido-NAD(+) (ammonia route): step 1/1. Catalyzes the ATP-dependent amidation of deamido-NAD to form NAD. Uses ammonia as a nitrogen source. The polypeptide is NH(3)-dependent NAD(+) synthetase (Latilactobacillus sakei subsp. sakei (strain 23K) (Lactobacillus sakei subsp. sakei)).